The chain runs to 301 residues: MKRIGLFLLTNLAILVVLGVVLFILQAVFGVRTLDEAGVGLDYTGLLIIAAVIGFGGSFISLAMSKFIAKRMTGARVIEKPRSEAEQWLVDTVRRFARQEGIGMPEVAIYDAPDMNAFATGARRNNSLVAVSTGLLQSMTRDEAEAVIGHEIAHISNGDMVTLTLIQGVVNTFVVFFSRIIGHFVDRVVFKTEQGHGPAYFITSIFAQIVLGILASVIVMWFSRQREYRADAGGAKLAGRDKMIAALERLKRSVDQEHLPDQLEAFGINGNRGGGMKEWFMSHPPLDDRIAALKEGRHLRG.

Helical transmembrane passes span 4–24 (IGLF…VLFI) and 44–64 (TGLL…SLAM). H150 contacts Zn(2+). E151 is an active-site residue. Residue H154 coordinates Zn(2+). The next 2 membrane-spanning stretches (helical) occupy residues 165-185 (LIQG…GHFV) and 201-221 (FITS…IVMW). Zn(2+) is bound at residue E227.

The protein belongs to the peptidase M48B family. Zn(2+) is required as a cofactor.

It localises to the cell inner membrane. The chain is Protease HtpX from Alkalilimnicola ehrlichii (strain ATCC BAA-1101 / DSM 17681 / MLHE-1).